Here is a 333-residue protein sequence, read N- to C-terminus: Phosphate acyltransferase (333 aa).

This sequence belongs to the PlsX family. In terms of assembly, homodimer. Probably interacts with PlsY.

The protein localises to the cytoplasm. It carries out the reaction a fatty acyl-[ACP] + phosphate = an acyl phosphate + holo-[ACP]. It functions in the pathway lipid metabolism; phospholipid metabolism. Catalyzes the reversible formation of acyl-phosphate (acyl-PO(4)) from acyl-[acyl-carrier-protein] (acyl-ACP). This enzyme utilizes acyl-ACP as fatty acyl donor, but not acyl-CoA. The protein is Phosphate acyltransferase of Thermosipho melanesiensis (strain DSM 12029 / CIP 104789 / BI429).